Here is a 137-residue protein sequence, read N- to C-terminus: BolA-like protein 1 (137 aa).

S81 is subject to Phosphoserine. Residues 114-137 (WRENSQLDTSPPCLGGNKKTLGTP) form a disordered region.

It belongs to the BolA/IbaG family. Interacts with GLRX5. Widely expressed.

It is found in the mitochondrion. In terms of biological role, acts as a mitochondrial iron-sulfur (Fe-S) cluster assembly factor that facilitates (Fe-S) cluster insertion into a subset of mitochondrial proteins. Probably acts together with the monothiol glutaredoxin GLRX5. May protect cells against oxidative stress. The chain is BolA-like protein 1 from Homo sapiens (Human).